Consider the following 343-residue polypeptide: L-idonate 5-dehydrogenase (NAD(P)(+)) (343 aa).

Positions 40, 65, 93, 96, 99, 107, and 153 each coordinate Zn(2+).

This sequence belongs to the zinc-containing alcohol dehydrogenase family. Zn(2+) is required as a cofactor.

It carries out the reaction L-idonate + NADP(+) = 5-dehydro-D-gluconate + NADPH + H(+). The enzyme catalyses L-idonate + NAD(+) = 5-dehydro-D-gluconate + NADH + H(+). It functions in the pathway carbohydrate acid metabolism; L-idonate degradation. Catalyzes the NADH/NADPH-dependent oxidation of L-idonate to 5-ketogluconate (5KG). In Escherichia coli (strain K12), this protein is L-idonate 5-dehydrogenase (NAD(P)(+)) (idnD).